Reading from the N-terminus, the 205-residue chain is Probable GTP-binding protein EngB (205 aa).

One can recognise an EngB-type G domain in the interval 22-194; that stretch reads ELPEIAFAGR…WESILDLCEI (173 aa). GTP is bound by residues 30-37, 57-61, 75-78, 142-145, and 173-175; these read GRSNVGKS, GRTQL, DLPG, TKAD, and FSA. Residues Ser37 and Thr59 each contribute to the Mg(2+) site.

Belongs to the TRAFAC class TrmE-Era-EngA-EngB-Septin-like GTPase superfamily. EngB GTPase family. Mg(2+) serves as cofactor.

Necessary for normal cell division and for the maintenance of normal septation. The polypeptide is Probable GTP-binding protein EngB (Desulfatibacillum aliphaticivorans).